A 344-amino-acid chain; its full sequence is S-adenosylmethionine:tRNA ribosyltransferase-isomerase (344 aa).

It belongs to the QueA family. As to quaternary structure, monomer.

The protein localises to the cytoplasm. It carries out the reaction 7-aminomethyl-7-carbaguanosine(34) in tRNA + S-adenosyl-L-methionine = epoxyqueuosine(34) in tRNA + adenine + L-methionine + 2 H(+). It participates in tRNA modification; tRNA-queuosine biosynthesis. Its function is as follows. Transfers and isomerizes the ribose moiety from AdoMet to the 7-aminomethyl group of 7-deazaguanine (preQ1-tRNA) to give epoxyqueuosine (oQ-tRNA). This is S-adenosylmethionine:tRNA ribosyltransferase-isomerase from Acinetobacter baylyi (strain ATCC 33305 / BD413 / ADP1).